The chain runs to 357 residues: NADH-quinone oxidoreductase subunit H (357 aa).

8 helical membrane-spanning segments follow: residues 18–38 (VAWM…PIIL), 92–112 (VLFV…WAVV), 127–147 (LLYI…AGWA), 165–185 (VSYE…SGSL), 206–226 (FLSW…ISAV), 268–288 (ILLS…PIDI), 294–314 (IPGW…FVWF), and 329–349 (LGWK…AIWM).

The protein belongs to the complex I subunit 1 family. In terms of assembly, NDH-1 is composed of 14 different subunits. Subunits NuoA, H, J, K, L, M, N constitute the membrane sector of the complex.

The protein localises to the cell inner membrane. It carries out the reaction a quinone + NADH + 5 H(+)(in) = a quinol + NAD(+) + 4 H(+)(out). NDH-1 shuttles electrons from NADH, via FMN and iron-sulfur (Fe-S) centers, to quinones in the respiratory chain. The immediate electron acceptor for the enzyme in this species is believed to be ubiquinone. Couples the redox reaction to proton translocation (for every two electrons transferred, four hydrogen ions are translocated across the cytoplasmic membrane), and thus conserves the redox energy in a proton gradient. This subunit may bind ubiquinone. This Bordetella bronchiseptica (strain ATCC BAA-588 / NCTC 13252 / RB50) (Alcaligenes bronchisepticus) protein is NADH-quinone oxidoreductase subunit H.